A 911-amino-acid chain; its full sequence is Transferrin-binding protein A (911 aa).

The signal sequence occupies residues 1-24; sequence MQQQHLFRLNILCLSLMTALPAYA. Positions 38-45 match the TonB box motif; the sequence is DTIQVKAK. The region spanning 51–176 is the TBDR plug domain; sequence RDNEVTGLGK…LAGSVAFQTK (126 aa). A TBDR beta-barrel domain is found at 187–911; sequence QWGIQSKTAY…NYTFSLEMKF (725 aa). Positions 894–911 match the TonB C-terminal box motif; it reads NRYAAPGRNYTFSLEMKF.

It belongs to the TonB-dependent receptor family. In terms of assembly, binds both human apo- and holo-transferrin (TF), via the TF C-terminus. Forms a large complex with TF and TbpB.

It localises to the cell outer membrane. Functionally, neisseria acquires iron by extracting it from serum transferrin (TF) in its human host. Acts as a TF receptor and is required for TF utilization. Binds both apo- and holo-TF, via the TF C-terminus. In Neisseria meningitidis serogroup B, this protein is Transferrin-binding protein A.